Reading from the N-terminus, the 520-residue chain is Peptide chain release factor 3 (520 aa).

One can recognise a tr-type G domain in the interval 8-277 (ESRKTFAIIS…HAPMPNARQT (270 aa)). GTP is bound by residues 17-24 (SHPDAGKT), 85-89 (DTPGH), and 139-142 (NKLD).

The protein belongs to the TRAFAC class translation factor GTPase superfamily. Classic translation factor GTPase family. PrfC subfamily.

It is found in the cytoplasm. In terms of biological role, increases the formation of ribosomal termination complexes and stimulates activities of RF-1 and RF-2. It binds guanine nucleotides and has strong preference for UGA stop codons. It may interact directly with the ribosome. The stimulation of RF-1 and RF-2 is significantly reduced by GTP and GDP, but not by GMP. This is Peptide chain release factor 3 from Staphylococcus epidermidis (strain ATCC 35984 / DSM 28319 / BCRC 17069 / CCUG 31568 / BM 3577 / RP62A).